Reading from the N-terminus, the 321-residue chain is MANFKLFLALAACLSGQALAAPTKTIGKRAAITDVAHGYASQNGGTTGGAGGTTTTVSSYAQFTEAVSSDDAKIVIVDGTITETADQVKVGSNTSIIGKDANAILEGFGLLVKEKENVIIRNLGVKKVLADNGDAIGVQYSNNVWIDHCDVSSDRDHDKDYYDGLIDLTHAADYVTVSNTFVHDHWKAMLFGHSDSNGDEDTGHLRITVNNNYLNNLNSRGPSFRFGTGHLYNNYYLDVSDGINTRQGAQLLVEGNVWSGGKKPLYSTDDGYAVARDNDFGDGENTAPEGTLTSVPYEYDLLAASAVKDAVVGTAGQTLTF.

Positions 1-20 (MANFKLFLALAACLSGQALA) are cleaved as a signal peptide. A glycan (N-linked (GlcNAc...) asparagine) is linked at Asn93. Ca(2+)-binding residues include Asp134, Asp163, and Asp167. Arg220 is an active-site residue.

Belongs to the polysaccharide lyase 1 family. It depends on Ca(2+) as a cofactor.

Its subcellular location is the secreted. It carries out the reaction Eliminative cleavage of (1-&gt;4)-alpha-D-galacturonan to give oligosaccharides with 4-deoxy-alpha-D-galact-4-enuronosyl groups at their non-reducing ends.. Pectinolytic enzyme consist of four classes of enzymes: pectin lyase, polygalacturonase, pectin methylesterase and rhamnogalacturonase. Among pectinolytic enzymes, pectin lyase is the most important in depolymerization of pectin, since it cleaves internal glycosidic bonds of highly methylated pectins. Favors pectate, the anion, over pectin, the methyl ester. This chain is Probable pectate lyase A (plyA), found in Aspergillus flavus (strain ATCC 200026 / FGSC A1120 / IAM 13836 / NRRL 3357 / JCM 12722 / SRRC 167).